The chain runs to 828 residues: MTDNQENKPKKLTLSNTKLSLNKSFDSLASTQSFVNAKSKTLVEVRKSYSGSTTTLSLNKEKGSLETGSSSGSEEFNRRLSILKKAAEQSKLNDNSQISTLSKLASINQSIASQEDPIEVEQEESSDTNKVKEEPKIEEVKDIEESTLQTPKKKEDIFVKSPLVGTRTRYGIESEKTVDKVTENKVIAPKPKVEESRKFKKTDLFNMVGDDENDNRNRTRSLASIKRAREKEKRKSLVQAPEKVYREITLPEVIGVGDFANAMSERVSDVIKELMKLGILANASQTIDADTAELVATHLGHAVKRVQESDVENILITNDKEEDLRSRAPVVTVMGHVDHGKTSLLDALKSTDVASGETGGITQHIGAYRVTLADGRAITFIDTPGHEAFSEMRSRGAGVTDIVIIVVAADDGIKPQTVEAINHAKAANVPIIVAINKIDKPDIDIERVKNELYMYEIIGEEAGGDVMVIPISALKKINLDKLEEAILLIAEMQNLKASPFGSASGVVIESKIEKGRGALTTMLVQRGTLKSGDIIIAGTAYGKVKKMTNDKGIEVLEATPSVPIEIQGLSHVPHAGDMFNVVQTEKQAKDIAEYRERVAKEKKISIAPRSSLEDLFLKASGSSKIKELPLIIKGDVHGSVEAIAGSLLKLPNDEVKLRILHSGVGPITESDVSLAHASSAIIVGFNVRAGANAKTAAEKEKVEIRYYSIIYDLLDDVKAIMSGMLDPIIREQYIGSVEIRQIFNITKIGKIAGSYVTRGIIKKGAGVRLLRDNIVIHEGKLKTLKRFKEEVKEVREGYECGIAFENYEDIREGDTVEVFELIQEKKQL.

2 disordered regions span residues 48–76 (SYSGSTTTLSLNKEKGSLETGSSSGSEEF) and 112–137 (ASQEDPIEVEQEESSDTNKVKEEPKI). Residues 49–58 (YSGSTTTLSL) are compositionally biased toward polar residues. Positions 65–74 (LETGSSSGSE) are enriched in low complexity. Residues 116 to 126 (DPIEVEQEESS) show a composition bias toward acidic residues. Residues 127–137 (DTNKVKEEPKI) are compositionally biased toward basic and acidic residues. In terms of domain architecture, tr-type G spans 326-496 (SRAPVVTVMG…LLIAEMQNLK (171 aa)). The tract at residues 335–342 (GHVDHGKT) is G1. Residue 335–342 (GHVDHGKT) participates in GTP binding. The tract at residues 360–364 (GITQH) is G2. The G3 stretch occupies residues 382-385 (DTPG). GTP-binding positions include 382–386 (DTPGH) and 436–439 (NKID). The tract at residues 436–439 (NKID) is G4. The G5 stretch occupies residues 472–474 (SAL).

This sequence belongs to the TRAFAC class translation factor GTPase superfamily. Classic translation factor GTPase family. IF-2 subfamily.

It is found in the cytoplasm. Its function is as follows. One of the essential components for the initiation of protein synthesis. Protects formylmethionyl-tRNA from spontaneous hydrolysis and promotes its binding to the 30S ribosomal subunits. Also involved in the hydrolysis of GTP during the formation of the 70S ribosomal complex. This is Translation initiation factor IF-2 from Rickettsia bellii (strain RML369-C).